We begin with the raw amino-acid sequence, 84 residues long: Large ribosomal subunit protein bL31B (84 aa).

The protein belongs to the bacterial ribosomal protein bL31 family. Type B subfamily. As to quaternary structure, part of the 50S ribosomal subunit.

This Parabacteroides distasonis (strain ATCC 8503 / DSM 20701 / CIP 104284 / JCM 5825 / NCTC 11152) protein is Large ribosomal subunit protein bL31B.